A 524-amino-acid polypeptide reads, in one-letter code: DEAD-box ATP-dependent RNA helicase CshA (524 aa).

Residues 1-29 (MKFNELNLSADLLAEIEKAGFVEASPIQE) carry the Q motif motif. The Helicase ATP-binding domain occupies 32–202 (IPLALEGKDV…VQFMKAPEHV (171 aa)). 45–52 (AQTGTGKT) serves as a coordination point for ATP. Positions 150–153 (DEAD) match the DEAD box motif. Positions 213-373 (LVDQYYIRVK…GLKPASVEES (161 aa)) constitute a Helicase C-terminal domain. The disordered stretch occupies residues 440–524 (EKPLPFKPSG…GFVIRNKGDK (85 aa)). The segment covering 463-498 (RRGDDRRERDRRGNGRRDEFKKGSRGNDRFDKEKRY) has biased composition (basic and acidic residues).

It belongs to the DEAD box helicase family. CshA subfamily. As to quaternary structure, oligomerizes, may be a member of the RNA degradosome.

The protein localises to the cytoplasm. It catalyses the reaction ATP + H2O = ADP + phosphate + H(+). DEAD-box RNA helicase possibly involved in RNA degradation. Unwinds dsRNA in both 5'- and 3'-directions, has RNA-dependent ATPase activity. The sequence is that of DEAD-box ATP-dependent RNA helicase CshA from Streptococcus pneumoniae serotype 4 (strain ATCC BAA-334 / TIGR4).